The chain runs to 35 residues: LNLVDQLGEADEELAGTYAELGDWCAQRILQHVQR.

A leucine-zipper region spans residues 1 to 21; sequence LNLVDQLGEADEELAGTYAEL.

It belongs to the N-acylglucosamine 2-epimerase family. Homodimer. Forms a heterodimer with renin and inhibits its activity.

It catalyses the reaction an N-acyl-D-glucosamine = an N-acyl-D-mannosamine. It participates in amino-sugar metabolism; N-acetylneuraminate degradation. Catalyzes the interconversion of N-acetylglucosamine to N-acetylmannosamine. Involved in the N-glycolylneuraminic acid (Neu5Gc) degradation pathway. The chain is N-acylglucosamine 2-epimerase from Canis lupus familiaris (Dog).